Reading from the N-terminus, the 304-residue chain is Nod factor export ATP-binding protein I (304 aa).

The ABC transporter domain occupies 6–236 (IDFQQVEKRY…EIGCDVIEIY (231 aa)). Residue 38-45 (GPNGAGKT) participates in ATP binding.

It belongs to the ABC transporter superfamily. Lipooligosaccharide exporter (TC 3.A.1.102) family. In terms of assembly, the complex is composed of two ATP-binding proteins (NodI) and two transmembrane proteins (NodJ).

The protein resides in the cell inner membrane. In terms of biological role, part of the ABC transporter complex NodIJ involved in the export of the nodulation factors (Nod factors), the bacterial signal molecules that induce symbiosis and subsequent nodulation induction. Nod factors are LCO (lipo-chitin oligosaccharide), a modified beta-1,4-linked N-acetylglucosamine oligosaccharide. This subunit is responsible for energy coupling to the transport system. The sequence is that of Nod factor export ATP-binding protein I from Burkholderia thailandensis (strain ATCC 700388 / DSM 13276 / CCUG 48851 / CIP 106301 / E264).